Consider the following 338-residue polypeptide: Ketol-acid reductoisomerase (NADP(+)) (338 aa).

In terms of domain architecture, KARI N-terminal Rossmann spans 1–181 (MNVFYDKDAD…GGGRAGIIET (181 aa)). Residues 24-27 (YGSQ), Arg47, and Ser52 contribute to the NADP(+) site. The active site involves His107. Gly133 contributes to the NADP(+) binding site. The KARI C-terminal knotted domain occupies 182–327 (NFREETETDL…AKLRAMMPWI (146 aa)). Residues Asp190, Glu194, Glu226, and Glu230 each contribute to the Mg(2+) site. Ser251 provides a ligand contact to substrate.

Belongs to the ketol-acid reductoisomerase family. It depends on Mg(2+) as a cofactor.

The enzyme catalyses (2R)-2,3-dihydroxy-3-methylbutanoate + NADP(+) = (2S)-2-acetolactate + NADPH + H(+). It catalyses the reaction (2R,3R)-2,3-dihydroxy-3-methylpentanoate + NADP(+) = (S)-2-ethyl-2-hydroxy-3-oxobutanoate + NADPH + H(+). It functions in the pathway amino-acid biosynthesis; L-isoleucine biosynthesis; L-isoleucine from 2-oxobutanoate: step 2/4. It participates in amino-acid biosynthesis; L-valine biosynthesis; L-valine from pyruvate: step 2/4. Involved in the biosynthesis of branched-chain amino acids (BCAA). Catalyzes an alkyl-migration followed by a ketol-acid reduction of (S)-2-acetolactate (S2AL) to yield (R)-2,3-dihydroxy-isovalerate. In the isomerase reaction, S2AL is rearranged via a Mg-dependent methyl migration to produce 3-hydroxy-3-methyl-2-ketobutyrate (HMKB). In the reductase reaction, this 2-ketoacid undergoes a metal-dependent reduction by NADPH to yield (R)-2,3-dihydroxy-isovalerate. The protein is Ketol-acid reductoisomerase (NADP(+)) of Burkholderia multivorans (strain ATCC 17616 / 249).